The primary structure comprises 465 residues: FeMo cofactor biosynthesis protein FixZ (465 aa).

The disordered stretch occupies residues 1–36 (MSEPEIKVGKTSSALFDRAPMAPSMPGGRASSSHGL). The Radical SAM core domain maps to 61–312 (HHYFARMHXX…MRHCQQCRAD (252 aa)). Residues cysteine 75 and cysteine 79 each contribute to the [4Fe-4S] cluster site. Tyrosine 81 contacts S-adenosyl-L-methionine. Cysteine 82 serves as a coordination point for [4Fe-4S] cluster. S-adenosyl-L-methionine contacts are provided by glycine 129, threonine 181, and isoleucine 233. [4Fe-4S] cluster-binding residues include cysteine 306 and cysteine 309.

This sequence belongs to the radical SAM superfamily. NifB family. The cofactor is [4Fe-4S] cluster.

Its pathway is cofactor biosynthesis; Fe-Mo cofactor biosynthesis. Functionally, involved in the biosynthesis of the iron-molybdenum cofactor (FeMo-co or M-cluster) found in the dinitrogenase enzyme of the nitrogenase complex in nitrogen-fixing microorganisms. Catalyzes the crucial step of radical SAM-dependent carbide insertion that occurs concomitant with the insertion of a 9th sulfur and the rearrangement/coupling of two [4Fe-4S] clusters into a [8Fe-9S-C] cluster, the precursor to the M-cluster. The protein is FeMo cofactor biosynthesis protein FixZ (fixZ) of Rhizobium leguminosarum.